The primary structure comprises 918 residues: Protein translocase subunit SecA (918 aa).

ATP is bound by residues glutamine 87, 105 to 109 (GEGKT), and aspartate 516. Zn(2+) contacts are provided by cysteine 902, cysteine 904, cysteine 913, and histidine 914.

It belongs to the SecA family. As to quaternary structure, monomer and homodimer. Part of the essential Sec protein translocation apparatus which comprises SecA, SecYEG and auxiliary proteins SecDF-YajC and YidC. Requires Zn(2+) as cofactor.

It localises to the cell inner membrane. The protein resides in the cytoplasm. The catalysed reaction is ATP + H2O + cellular proteinSide 1 = ADP + phosphate + cellular proteinSide 2.. Its function is as follows. Part of the Sec protein translocase complex. Interacts with the SecYEG preprotein conducting channel. Has a central role in coupling the hydrolysis of ATP to the transfer of proteins into and across the cell membrane, serving both as a receptor for the preprotein-SecB complex and as an ATP-driven molecular motor driving the stepwise translocation of polypeptide chains across the membrane. The protein is Protein translocase subunit SecA of Methylibium petroleiphilum (strain ATCC BAA-1232 / LMG 22953 / PM1).